A 98-amino-acid chain; its full sequence is Small ribosomal subunit protein uS19 (98 aa).

Belongs to the universal ribosomal protein uS19 family.

Its function is as follows. Protein S19 forms a complex with S13 that binds strongly to the 16S ribosomal RNA. The protein is Small ribosomal subunit protein uS19 of Chlorobaculum parvum (strain DSM 263 / NCIMB 8327) (Chlorobium vibrioforme subsp. thiosulfatophilum).